Consider the following 430-residue polypeptide: Enolase (430 aa).

Gln-163 contacts (2R)-2-phosphoglycerate. The active-site Proton donor is the Glu-205. Residues Asp-242, Glu-287, and Asp-314 each contribute to the Mg(2+) site. Residues Lys-339, Arg-368, Ser-369, and Lys-390 each coordinate (2R)-2-phosphoglycerate. Catalysis depends on Lys-339, which acts as the Proton acceptor.

It belongs to the enolase family. Requires Mg(2+) as cofactor.

It localises to the cytoplasm. The protein localises to the secreted. It is found in the cell surface. It catalyses the reaction (2R)-2-phosphoglycerate = phosphoenolpyruvate + H2O. It functions in the pathway carbohydrate degradation; glycolysis; pyruvate from D-glyceraldehyde 3-phosphate: step 4/5. In terms of biological role, catalyzes the reversible conversion of 2-phosphoglycerate (2-PG) into phosphoenolpyruvate (PEP). It is essential for the degradation of carbohydrates via glycolysis. The chain is Enolase from Bacillus licheniformis (strain ATCC 14580 / DSM 13 / JCM 2505 / CCUG 7422 / NBRC 12200 / NCIMB 9375 / NCTC 10341 / NRRL NRS-1264 / Gibson 46).